The primary structure comprises 372 residues: Chaperone protein DnaJ (372 aa).

The J domain occupies 5–69; sequence DYYEVLGLSK…QKKAQYDQFG (65 aa). A CR-type zinc finger spans residues 129–211; that stretch reads GAEKEISVKK…CGGTGRKVKT (83 aa). Zn(2+) is bound by residues Cys142, Cys145, Cys159, Cys162, Cys185, Cys188, Cys199, and Cys202. CXXCXGXG motif repeat units follow at residues 142–149, 159–166, 185–192, and 199–206; these read CDTCDGSG, CSTCGGRG, CPDCGGTG, and CSDCGGTG.

It belongs to the DnaJ family. As to quaternary structure, homodimer. Zn(2+) serves as cofactor.

The protein resides in the cytoplasm. Functionally, participates actively in the response to hyperosmotic and heat shock by preventing the aggregation of stress-denatured proteins and by disaggregating proteins, also in an autonomous, DnaK-independent fashion. Unfolded proteins bind initially to DnaJ; upon interaction with the DnaJ-bound protein, DnaK hydrolyzes its bound ATP, resulting in the formation of a stable complex. GrpE releases ADP from DnaK; ATP binding to DnaK triggers the release of the substrate protein, thus completing the reaction cycle. Several rounds of ATP-dependent interactions between DnaJ, DnaK and GrpE are required for fully efficient folding. Also involved, together with DnaK and GrpE, in the DNA replication of plasmids through activation of initiation proteins. The chain is Chaperone protein DnaJ from Macrococcus caseolyticus (strain JCSC5402) (Macrococcoides caseolyticum).